Reading from the N-terminus, the 380-residue chain is Gonadotropin-releasing hormone II receptor (380 aa).

The Extracellular segment spans residues methionine 1–arginine 40. A helical transmembrane segment spans residues valine 41 to tryptophan 60. At serine 61–arginine 76 the chain is on the cytoplasmic side. Residues arginine 77–leucine 96 form a helical membrane-spanning segment. Over aspartate 97 to arginine 114 the chain is Extracellular. Asparagine 101 is a glycosylation site (N-linked (GlcNAc...) asparagine). Residues cysteine 113 and cysteine 188 are joined by a disulfide bond. Residues threonine 115–leucine 136 traverse the membrane as a helical segment. Residues aspartate 137–tryptophan 160 are Cytoplasmic-facing. The helical transmembrane segment at glycine 161–histidine 178 threads the bilayer. Residues arginine 179–asparagine 204 lie on the Extracellular side of the membrane. Residues leucine 205–serine 224 traverse the membrane as a helical segment. Residues arginine 225 to threonine 278 are Cytoplasmic-facing. A helical membrane pass occupies residues proline 279 to valine 297. The Extracellular portion of the chain corresponds to proline 298–histidine 303. The chain crosses the membrane as a helical span at residues isoleucine 304–phenylalanine 323. Residues threonine 324–isoleucine 380 are Cytoplasmic-facing.

Belongs to the G-protein coupled receptor 1 family. Post-translationally, phosphorylated on the C-terminal cytoplasmic tail.

The protein localises to the cell membrane. Receptor for gonadotropin releasing hormone II (GnRH II). This receptor mediates its action by association with G proteins that activate a phosphatidylinositol-calcium second messenger system. This is Gonadotropin-releasing hormone II receptor (GNRHR2) from Callithrix jacchus (White-tufted-ear marmoset).